Reading from the N-terminus, the 192-residue chain is HTH-type transcriptional regulator Hpr (192 aa).

Positions 12-156 (SIIFSHKFAQ…LLSIVRHVYG (145 aa)) constitute an HTH marR-type domain. Residues 62–85 (ISDIAKFGVMHVSTAFNFSKKLEE) constitute a DNA-binding region (H-T-H motif).

As to quaternary structure, homodimer.

Its function is as follows. Negative regulator of protease production and sporulation. This Halalkalibacterium halodurans (strain ATCC BAA-125 / DSM 18197 / FERM 7344 / JCM 9153 / C-125) (Bacillus halodurans) protein is HTH-type transcriptional regulator Hpr.